The primary structure comprises 421 residues: MAAKAVDKLPVTFGSFVHQIPEGFYPGEDSTLPASVTIFPNVDLGGPLIQMSGVTGDGMISVDMNNDKRSLDFSYSSNYPLAPRTQPIAYMGKISIDHQYSGSGWNTEGIFNLVSAASLLGVPPSSCSSTSSSNASSGSPNLSCSMSHPQSDLEHIYSPPPYSSCNEIYQDPLRFPCGSPTAASLPPPPSYPSPKGASDGGMFPMIPDYSALFPPQCQRDLHSDRKPFPCPRHPSPLSTIRNFTLGGSSEGPRLASAYSPQNLPLRPILRPRKYPNRPSKTPVHERPYPCPAEGCDRRFSRSDELTRHIRIHTGHKPFQCRICMRNFSRSDHLTTHIRTHTGEKPFACDYCGRKFARSDERKRHTKIHLRQKERKNSATAAWRQHVARTSLKPQSGRDRQPCALLGPAAAHWDSIDPNRTG.

Positions 127–145 (CSSTSSSNASSGSPNLSCS) are enriched in low complexity. Disordered regions lie at residues 127-152 (CSST…PQSD), 179-200 (SPTA…ASDG), and 223-288 (SDRK…ERPY). Residues 236 to 247 (PLSTIRNFTLGG) are compositionally biased toward polar residues. 3 C2H2-type zinc fingers span residues 288-312 (YPCP…IRIH), 318-340 (FQCR…IRTH), and 346-368 (FACD…TKIH).

Belongs to the EGR C2H2-type zinc-finger protein family.

The protein localises to the nucleus. In terms of biological role, sequence-specific DNA-binding transcription factor. The sequence is that of Early growth response protein 2 (egr2) from Xenopus laevis (African clawed frog).